The sequence spans 240 residues: Protein FAM246C (240 aa).

Disordered regions lie at residues 1 to 117 (MAEP…WRSA) and 161 to 240 (LPAA…TRAA). 2 stretches are compositionally biased toward basic and acidic residues: residues 19–31 (EVLR…RRDP) and 60–74 (AASR…KLVE). Positions 165–175 (SPAPSPAPRPA) are enriched in pro residues. The segment covering 176–187 (ARPCRGRSAPLA) has biased composition (low complexity).

It belongs to the FAM246 family.

This Homo sapiens (Human) protein is Protein FAM246C.